The sequence spans 143 residues: Peptide methionine sulfoxide reductase MsrB (143 aa).

Positions 5-126 (KEEKIKSLNR…NSAALRFVPK (122 aa)) constitute a MsrB domain. Cys115 functions as the Nucleophile in the catalytic mechanism.

It belongs to the MsrB Met sulfoxide reductase family.

The enzyme catalyses L-methionyl-[protein] + [thioredoxin]-disulfide + H2O = L-methionyl-(R)-S-oxide-[protein] + [thioredoxin]-dithiol. In Bacillus subtilis (strain 168), this protein is Peptide methionine sulfoxide reductase MsrB.